The following is a 459-amino-acid chain: Glycosyl hydrolase family 109 protein (459 aa).

A signal peptide (tat-type signal) is located at residues 1–31 (MHNIHRRNFLKAAGAATAGLVTANIALSAYA). NAD(+) contacts are provided by residues 64–65 (ER), D86, 135–138 (WEWH), 155–156 (EV), and N184. Residues Y213, R232, 244-247 (YPTH), and Y326 contribute to the substrate site. Y244 serves as a coordination point for NAD(+).

Belongs to the Gfo/Idh/MocA family. Glycosyl hydrolase 109 subfamily. The cofactor is NAD(+). In terms of processing, predicted to be exported by the Tat system. The position of the signal peptide cleavage has not been experimentally proven.

Functionally, glycosidase. This chain is Glycosyl hydrolase family 109 protein, found in Shewanella baltica (strain OS185).